The chain runs to 715 residues: Patatin-like phospholipase domain-containing protein ATEG_02594 (715 aa).

A helical membrane pass occupies residues 84–104 (WPFLAFVLGWISFLGVAYILT). The PNPLA domain maps to 274-465 (LCLSGGATFA…RTDIPIKALN (192 aa)). The GXSXG signature appears at 305-309 (GTSGG). Serine 307 (nucleophile) is an active-site residue. Residue aspartate 452 is the Proton acceptor of the active site. The tract at residues 613–715 (TAPRGGGRAT…DVDSDTWKGQ (103 aa)) is disordered. The segment covering 652–661 (RTGEYSKEAD) has biased composition (basic and acidic residues). Polar residues predominate over residues 665-678 (AEMSDSSGVDSATA).

The protein belongs to the PLPL family.

The protein resides in the membrane. Functionally, probable lipid hydrolase. This Aspergillus terreus (strain NIH 2624 / FGSC A1156) protein is Patatin-like phospholipase domain-containing protein ATEG_02594.